A 259-amino-acid chain; its full sequence is Zinc import ATP-binding protein ZnuC (259 aa).

The 215-residue stretch at 11-225 (IRLENIYVHR…PEYLAIFGGQ (215 aa)) folds into the ABC transporter domain. Residue 43–50 (GPNGAGKS) participates in ATP binding.

It belongs to the ABC transporter superfamily. Zinc importer (TC 3.A.1.15.5) family. As to quaternary structure, the complex is composed of two ATP-binding proteins (ZnuC), two transmembrane proteins (ZnuB) and a solute-binding protein (ZnuA).

The protein resides in the cell inner membrane. The enzyme catalyses Zn(2+)(out) + ATP(in) + H2O(in) = Zn(2+)(in) + ADP(in) + phosphate(in) + H(+)(in). Functionally, part of the ABC transporter complex ZnuABC involved in zinc import. Responsible for energy coupling to the transport system. This Acinetobacter baylyi (strain ATCC 33305 / BD413 / ADP1) protein is Zinc import ATP-binding protein ZnuC.